The chain runs to 380 residues: Ceramide synthase 2 (380 aa).

The Lumenal segment spans residues 1 to 40; that stretch reads MLQTLYDYFWWERLWLPVNLTWADLEDRDGRVYAKASDLY. The N-linked (GlcNAc...) asparagine glycan is linked to asparagine 19. A helical transmembrane segment spans residues 41-61; that stretch reads ITLPLALLFLIVRYFFELYVA. Positions 67–128 are homeobox-like; the sequence is LLNIKEKTRL…RRRRNQDRPS (62 aa). One can recognise a TLC domain in the interval 131-332; sequence KKFREASWRF…ILRMAHKFIT (202 aa). 4 helical membrane-spanning segments follow: residues 140-160, 181-201, 209-229, and 264-284; these read FTFY…KPWF, WYYM…ASDV, QIIH…ANYI, and IFIV…PFWI. The short motif at 291–300 is the Last loop motif element; the sequence is YPLELYPAFF. The helical transmembrane segment at 304–324 threads the bilayer; sequence FFNSMMGVLQLLHIFWAYLIL. At 325–380 the chain is on the cytoplasmic side; it reads RMAHKFITGKLVEDERSDREETESSEGEEAAAGGGAKSRPLANGHPILNNNHRKND. The tract at residues 338–380 is disordered; sequence DERSDREETESSEGEEAAAGGGAKSRPLANGHPILNNNHRKND. Serine 341 is subject to Phosphoserine. A compositionally biased stretch (acidic residues) spans 344–353; the sequence is EETESSEGEE. The residue at position 346 (threonine 346) is a Phosphothreonine. Serine 348 and serine 349 each carry phosphoserine.

As to quaternary structure, interacts with ATP6V0C, ASGR1, ASGR2 and SLC22A1/OCT1. Interacts with ELOV1, HSD17B12 and TECR. Interacts with NDUFS2. Interacts with PAQR4; the interaction regulates the stability and activity of CERS2 and is inhibited in presence of ceramides. Acetylated. Deacetylation by SIRT3 increases enzyme activity and promotes mitochondrial ceramide accumulation. In terms of processing, phosphorylated at the C-terminus by CK2, leading to increase the ceramide synthase activity. Expressed in kidney, liver, brain, heart, placenta and lung.

The protein localises to the endoplasmic reticulum membrane. It catalyses the reaction a very long-chain fatty acyl-CoA + a sphingoid base = an N-(very-long-chain fatty acyl)-sphingoid base + CoA + H(+). It carries out the reaction docosanoyl-CoA + sphinganine = N-docosanoylsphinganine + CoA + H(+). The catalysed reaction is tetracosanoyl-CoA + sphinganine = N-tetracosanoylsphinganine + CoA + H(+). The enzyme catalyses hexacosanoyl-CoA + sphinganine = N-hexacosanoylsphinganine + CoA + H(+). It catalyses the reaction (15Z)-tetracosenoyl-CoA + sphinganine = N-(15Z-tetracosenoyl)-sphinganine + CoA + H(+). It carries out the reaction 2-hydroxytetracosanoyl-CoA + sphinganine = N-(2-hydroxytetracosanoyl)-sphinganine + CoA + H(+). The catalysed reaction is 2-hydroxydocosanoyl-CoA + sphinganine = N-(2-hydroxydocosanoyl)-sphinganine + CoA + H(+). The enzyme catalyses 2-hydroxytetracosenoyl-CoA + sphinganine = N-(2-hydroxytetracosenoyl)-sphinganine + CoA + H(+). It catalyses the reaction tetracosenoyl-CoA + sphinganine = an N-tetracosenoylsphinganine + CoA + H(+). It carries out the reaction hexacosenoyl-CoA + sphinganine = N-hexacosenoylsphinganine + CoA + H(+). The catalysed reaction is tetracosanoyl-CoA + sphing-4-enine = N-tetracosanoyl-sphing-4-enine + CoA + H(+). The enzyme catalyses tetracosenoyl-CoA + sphing-4-enine = N-(tetracosenoyl)-sphing-4-enine + CoA + H(+). It catalyses the reaction heptadecasphing-4-enine + tetracosanoyl-CoA = N-tetracosanoyl-heptadecasphing-4-enine + CoA + H(+). It carries out the reaction a fatty acyl-CoA + sphing-4-enine = an N-acylsphing-4-enine + CoA + H(+). The catalysed reaction is sphing-4-enine + hexadecanoyl-CoA = N-hexadecanoylsphing-4-enine + CoA + H(+). The enzyme catalyses sphing-4-enine + octadecanoyl-CoA = N-octadecanoylsphing-4-enine + CoA + H(+). It catalyses the reaction eicosanoyl-CoA + sphing-4-enine = N-eicosanoyl-sphing-4-enine + CoA + H(+). It carries out the reaction sphinganine + hexadecanoyl-CoA = N-hexadecanoylsphinganine + CoA + H(+). The catalysed reaction is sphinganine + octadecanoyl-CoA = N-(octadecanoyl)-sphinganine + CoA + H(+). The enzyme catalyses sphinganine + (9Z)-octadecenoyl-CoA = N-(9Z-octadecenoyl)-sphinganine + CoA + H(+). It catalyses the reaction eicosanoyl-CoA + sphinganine = N-eicosanoylsphinganine + CoA + H(+). Its pathway is lipid metabolism; sphingolipid metabolism. With respect to regulation, ceramide synthase activity is inhibited by sphingosine-1-phosphate. In terms of biological role, ceramide synthase that catalyzes the transfer of the acyl chain from acyl-CoA to a sphingoid base, with high selectivity toward very-long-chain fatty acyl-CoA (chain length C22-C27). N-acylates sphinganine and sphingosine bases to form dihydroceramides and ceramides in de novo synthesis and salvage pathways, respectively. Plays a non-redundant role in the synthesis of ceramides with very-long-chain fatty acids in kidney, liver and brain. Regulates the abundance of myelin-specific sphingolipids galactosylceramide and sulfatide that affects myelin sheath architecture and motor neuron functions. This is Ceramide synthase 2 from Homo sapiens (Human).